The chain runs to 156 residues: Protein-export protein SecB (156 aa).

The protein belongs to the SecB family. As to quaternary structure, homotetramer, a dimer of dimers. One homotetramer interacts with 1 SecA dimer.

It is found in the cytoplasm. Functionally, one of the proteins required for the normal export of preproteins out of the cell cytoplasm. It is a molecular chaperone that binds to a subset of precursor proteins, maintaining them in a translocation-competent state. It also specifically binds to its receptor SecA. The chain is Protein-export protein SecB from Serratia proteamaculans (strain 568).